Here is a 519-residue protein sequence, read N- to C-terminus: Cytochrome P450 52-E3 (519 aa).

Residues 10-30 (VLGGISVSFLLAYQAIYFYFI) traverse the membrane as a helical segment. C461 is a heme binding site.

The protein belongs to the cytochrome P450 family. The cofactor is heme.

It is found in the membrane. The enzyme catalyses an omega-methyl-long-chain fatty acid + reduced [NADPH--hemoprotein reductase] + O2 = an omega-hydroxy-long-chain fatty acid + oxidized [NADPH--hemoprotein reductase] + H2O + H(+). It carries out the reaction (9Z)-octadecenoate + reduced [NADPH--hemoprotein reductase] + O2 = 18-hydroxy-(9Z)-octadecenoate + oxidized [NADPH--hemoprotein reductase] + H2O + H(+). The catalysed reaction is hexadecanoate + reduced [NADPH--hemoprotein reductase] + O2 = 16-hydroxyhexadecanoate + oxidized [NADPH--hemoprotein reductase] + H2O + H(+). It catalyses the reaction (9Z)-hexadecenoate + reduced [NADPH--hemoprotein reductase] + O2 = (9Z)-16-hydroxyhexadec-9-enoate + oxidized [NADPH--hemoprotein reductase] + H2O + H(+). Functionally, catalyzes the terminal (at the omega-position) hydroxylation of a fatty acid. Probably involved in alkane metabolism. Has minor activity toward myristic acid, palmitic acid, palmitoleic acid and oleic acid. The sequence is that of Cytochrome P450 52-E3 from Starmerella bombicola (Yeast).